A 568-amino-acid chain; its full sequence is DNA mismatch repair protein MutL (568 aa).

This sequence belongs to the DNA mismatch repair MutL/HexB family.

Its function is as follows. This protein is involved in the repair of mismatches in DNA. It is required for dam-dependent methyl-directed DNA mismatch repair. May act as a 'molecular matchmaker', a protein that promotes the formation of a stable complex between two or more DNA-binding proteins in an ATP-dependent manner without itself being part of a final effector complex. This is DNA mismatch repair protein MutL from Nostoc punctiforme (strain ATCC 29133 / PCC 73102).